The following is a 175-amino-acid chain: Nudix hydrolase 25 (175 aa).

The region spanning 7–155 is the Nudix hydrolase domain; it reads GYRPNVGVCL…KRPTYEEVIK (149 aa). The Mn(2+) site is built by G40, E55, and E59. The Nudix box signature appears at 40–61; that stretch reads GGIEDGEDPKSAAMRELQEETG.

This sequence belongs to the Nudix hydrolase family. It depends on Mn(2+) as a cofactor.

It catalyses the reaction P(1),P(4)-bis(5'-guanosyl) tetraphosphate + H2O = GMP + GTP + 2 H(+). Its function is as follows. Mediates the hydrolysis of diadenosine 5',5''-P(1)P(4) tetraphosphate (Ap(4)A), a signaling molecule involved in regulation of DNA replication and repair. The polypeptide is Nudix hydrolase 25 (Arabidopsis thaliana (Mouse-ear cress)).